The following is a 740-amino-acid chain: Phosphoribosylformylglycinamidine synthase subunit PurL (740 aa).

H50 is an active-site residue. The ATP site is built by Y53 and K92. E94 contacts Mg(2+). Substrate-binding positions include 95-98 (SHNH) and R117. Catalysis depends on H96, which acts as the Proton acceptor. Position 118 (D118) interacts with Mg(2+). Substrate is bound at residue Q241. D269 lines the Mg(2+) pocket. 313–315 (ESQ) serves as a coordination point for substrate. Residues D495 and G532 each coordinate ATP. Residue N533 participates in Mg(2+) binding. S535 serves as a coordination point for substrate.

It belongs to the FGAMS family. Monomer. Part of the FGAM synthase complex composed of 1 PurL, 1 PurQ and 2 PurS subunits.

Its subcellular location is the cytoplasm. The enzyme catalyses N(2)-formyl-N(1)-(5-phospho-beta-D-ribosyl)glycinamide + L-glutamine + ATP + H2O = 2-formamido-N(1)-(5-O-phospho-beta-D-ribosyl)acetamidine + L-glutamate + ADP + phosphate + H(+). It functions in the pathway purine metabolism; IMP biosynthesis via de novo pathway; 5-amino-1-(5-phospho-D-ribosyl)imidazole from N(2)-formyl-N(1)-(5-phospho-D-ribosyl)glycinamide: step 1/2. Its function is as follows. Part of the phosphoribosylformylglycinamidine synthase complex involved in the purines biosynthetic pathway. Catalyzes the ATP-dependent conversion of formylglycinamide ribonucleotide (FGAR) and glutamine to yield formylglycinamidine ribonucleotide (FGAM) and glutamate. The FGAM synthase complex is composed of three subunits. PurQ produces an ammonia molecule by converting glutamine to glutamate. PurL transfers the ammonia molecule to FGAR to form FGAM in an ATP-dependent manner. PurS interacts with PurQ and PurL and is thought to assist in the transfer of the ammonia molecule from PurQ to PurL. The sequence is that of Phosphoribosylformylglycinamidine synthase subunit PurL from Brucella canis (strain ATCC 23365 / NCTC 10854 / RM-666).